Reading from the N-terminus, the 237-residue chain is Small ribosomal subunit protein uS2 (237 aa).

The protein belongs to the universal ribosomal protein uS2 family.

This is Small ribosomal subunit protein uS2 from Clostridioides difficile (strain 630) (Peptoclostridium difficile).